A 231-amino-acid chain; its full sequence is Nitrate reductase [NAD(P)H] (231 aa).

The region spanning 1 to 85 (PQKLGLPVGR…KGPHRHIEYT (85 aa)) is the FAD-binding FR-type domain. Residues 25–28 (RAYT), 42–46 (LIKIY), Phe-47, 59–61 (LMS), and Thr-112 contribute to the FAD site.

This sequence belongs to the nitrate reductase family. Homodimer. Requires FAD as cofactor. Heme is required as a cofactor. It depends on Mo-molybdopterin as a cofactor.

It carries out the reaction nitrite + NAD(+) + H2O = nitrate + NADH + H(+). The catalysed reaction is nitrite + NADP(+) + H2O = nitrate + NADPH + H(+). Its function is as follows. Nitrate reductase is a key enzyme involved in the first step of nitrate assimilation in plants, fungi and bacteria. The protein is Nitrate reductase [NAD(P)H] (NAR) of Zea mays (Maize).